The following is a 160-amino-acid chain: Phosphopantetheine adenylyltransferase (160 aa).

Residue threonine 9 coordinates substrate. Residues threonine 9 to phenylalanine 10 and histidine 17 contribute to the ATP site. Substrate contacts are provided by lysine 41, leucine 73, and arginine 87. ATP-binding positions include glycine 88 to arginine 90, glutamate 98, and tyrosine 123 to threonine 129.

This sequence belongs to the bacterial CoaD family. In terms of assembly, homohexamer. It depends on Mg(2+) as a cofactor.

The protein resides in the cytoplasm. It carries out the reaction (R)-4'-phosphopantetheine + ATP + H(+) = 3'-dephospho-CoA + diphosphate. It participates in cofactor biosynthesis; coenzyme A biosynthesis; CoA from (R)-pantothenate: step 4/5. In terms of biological role, reversibly transfers an adenylyl group from ATP to 4'-phosphopantetheine, yielding dephospho-CoA (dPCoA) and pyrophosphate. The polypeptide is Phosphopantetheine adenylyltransferase (Ectopseudomonas mendocina (strain ymp) (Pseudomonas mendocina)).